We begin with the raw amino-acid sequence, 254 residues long: Small ribosomal subunit protein uS2 (254 aa).

The interval 225–254 (ALSERKREKDDAKLKEDEESKKASDKAEIQ) is disordered. A compositionally biased stretch (basic and acidic residues) spans 226–254 (LSERKREKDDAKLKEDEESKKASDKAEIQ).

The protein belongs to the universal ribosomal protein uS2 family.

This chain is Small ribosomal subunit protein uS2, found in Cytophaga hutchinsonii (strain ATCC 33406 / DSM 1761 / CIP 103989 / NBRC 15051 / NCIMB 9469 / D465).